Here is an 882-residue protein sequence, read N- to C-terminus: Leucine--tRNA ligase (882 aa).

Residues 43–53 carry the 'HIGH' region motif; sequence PYPSGNLHMGH. The 'KMSKS' region motif lies at 632 to 636; the sequence is TMSKS. Position 635 (Lys635) interacts with ATP.

Belongs to the class-I aminoacyl-tRNA synthetase family.

Its subcellular location is the cytoplasm. The enzyme catalyses tRNA(Leu) + L-leucine + ATP = L-leucyl-tRNA(Leu) + AMP + diphosphate. The sequence is that of Leucine--tRNA ligase from Synechococcus sp. (strain JA-2-3B'a(2-13)) (Cyanobacteria bacterium Yellowstone B-Prime).